We begin with the raw amino-acid sequence, 945 residues long: Kinesin-like protein CIN8 (945 aa).

The Kinesin motor domain maps to 22–409 (NITVAVRCRG…LEYAAKAKNI (388 aa)). Residue 114-121 (GMTSTGKT) coordinates ATP. Residues 190 to 243 (IFDSSSMNHSSRASSQSNSPREPEVAHNGFSRRRQRPPPVKANRMSATKQQLSE) are disordered. The span at 193–208 (SSSMNHSSRASSQSNS) shows a compositional bias: low complexity. Residues 234–243 (MSATKQQLSE) show a composition bias toward polar residues. Coiled-coil stretches lie at residues 450–562 (MSHE…DIKE) and 634–675 (LKEF…YLDQ).

The protein belongs to the TRAFAC class myosin-kinesin ATPase superfamily. Kinesin family. BimC subfamily.

The protein localises to the cytoplasm. Its subcellular location is the cytoskeleton. It localises to the spindle. Elongates the mitotic spindle by interacting with spindle microtubules to generate an outward force pushing spindle poles apart. Following spindle assembly, CIN8 and KIP1 apparently act to oppose a force, possibly generated by KAR3, that draws separated poles back together. This Eremothecium gossypii (strain ATCC 10895 / CBS 109.51 / FGSC 9923 / NRRL Y-1056) (Yeast) protein is Kinesin-like protein CIN8 (CIN8).